The primary structure comprises 125 residues: Cardioactive peptide (125 aa).

The N-terminal stretch at methionine 1–alanine 22 is a signal peptide. Positions alanine 23 to lysine 42 are excised as a propeptide. A disulfide bridge links cysteine 47 with cysteine 53. At cysteine 53 the chain carries Cysteine amide. Residues arginine 57–glutamine 125 constitute a propeptide that is removed on maturation.

In terms of tissue distribution, abdominal perivisceral organ; major neurohemal release site. Expressed in 116 neurons in post-embryonic central nervous system. Nine pairs of cells are observed in the brain, 4.5 pairs in the subesophageal ganglion, three pairs in each thoracic ganglion (T1-T3), three pairs in the first abdominal ganglion (A1), five pairs each in the second to sixth abdominal ganglia (A2-A6) and 7.5 pairs in the terminal ganglion. Expressed in every ganglion in each post-embryonic stage, except in the thoracic ganglia of first- and second-instar larvae. Colocalizes with CAP2b in median neurosecretory cells during the last larval instar through to adults.

The protein localises to the secreted. Its function is as follows. Cardioregulatory neurohormone that increases heart beat rate during adult wing inflation; has no effect on beat amplitude. The effect of CCAP is both ino- and chronotropic. The protein is Cardioactive peptide of Manduca sexta (Tobacco hawkmoth).